Consider the following 132-residue polypeptide: ATP synthase epsilon chain (132 aa).

It belongs to the ATPase epsilon chain family. In terms of assembly, F-type ATPases have 2 components, CF(1) - the catalytic core - and CF(0) - the membrane proton channel. CF(1) has five subunits: alpha(3), beta(3), gamma(1), delta(1), epsilon(1). CF(0) has three main subunits: a, b and c.

It is found in the cell inner membrane. Functionally, produces ATP from ADP in the presence of a proton gradient across the membrane. This Gloeobacter violaceus (strain ATCC 29082 / PCC 7421) protein is ATP synthase epsilon chain.